A 198-amino-acid polypeptide reads, in one-letter code: HTH-type transcriptional repressor DhaR (198 aa).

Positions 4–64 constitute an HTH tetR-type domain; it reads TPVRQHLVEK…QVLQEFFSDL (61 aa).

Transcriptional repressor for the dhaA haloalkane dehalogenase gene. The polypeptide is HTH-type transcriptional repressor DhaR (dhaR) (Mycobacterium sp. (strain GP1)).